A 128-amino-acid chain; its full sequence is Large-conductance mechanosensitive channel (128 aa).

The next 2 helical transmembrane spans lie at 10-30 and 76-96; these read FAMR…GAFG and GLFI…FMMV.

Belongs to the MscL family. As to quaternary structure, homopentamer.

The protein localises to the cell inner membrane. In terms of biological role, channel that opens in response to stretch forces in the membrane lipid bilayer. May participate in the regulation of osmotic pressure changes within the cell. In Mannheimia succiniciproducens (strain KCTC 0769BP / MBEL55E), this protein is Large-conductance mechanosensitive channel.